A 546-amino-acid chain; its full sequence is Chromosomal replication initiator protein DnaA (546 aa).

The domain I, interacts with DnaA modulators stretch occupies residues 1–85; it reads MSDPQAALRA…TRALSQHMGR (85 aa). The segment at 85–204 is domain II; that stretch reads RPCSLAVTIA…EPAHNPNREK (120 aa). The span at 96–111 shows a compositional bias: pro residues; it reads PPQPAPQEEPPAPAPQ. A disordered region spans residues 96–209; that stretch reads PPQPAPQEEP…PNREKSLNPK (114 aa). The span at 126 to 145 shows a compositional bias: low complexity; sequence QTQAFQQPTQSTQPAPASQP. Residues 191 to 209 show a composition bias toward basic and acidic residues; sequence IPREEPAHNPNREKSLNPK. The interval 205 to 421 is domain III, AAA+ region; sequence SLNPKHTFEN…GALIRVSAYS (217 aa). 4 residues coordinate ATP: Gly249, Gly251, Lys252, and Thr253. The tract at residues 422–546 is domain IV, binds dsDNA; that stretch reads SLVNEPISLE…TQRVKNHNQR (125 aa).

Belongs to the DnaA family. In terms of assembly, oligomerizes as a right-handed, spiral filament on DNA at oriC.

The protein localises to the cytoplasm. In terms of biological role, plays an essential role in the initiation and regulation of chromosomal replication. ATP-DnaA binds to the origin of replication (oriC) to initiate formation of the DNA replication initiation complex once per cell cycle. Binds the DnaA box (a 9 base pair repeat at the origin) and separates the double-stranded (ds)DNA. Forms a right-handed helical filament on oriC DNA; dsDNA binds to the exterior of the filament while single-stranded (ss)DNA is stabiized in the filament's interior. The ATP-DnaA-oriC complex binds and stabilizes one strand of the AT-rich DNA unwinding element (DUE), permitting loading of DNA polymerase. After initiation quickly degrades to an ADP-DnaA complex that is not apt for DNA replication. Binds acidic phospholipids. This Corynebacterium aurimucosum (strain ATCC 700975 / DSM 44827 / CIP 107346 / CN-1) (Corynebacterium nigricans) protein is Chromosomal replication initiator protein DnaA.